The primary structure comprises 116 residues: Large ribosomal subunit protein bL20 (116 aa).

Belongs to the bacterial ribosomal protein bL20 family.

Its function is as follows. Binds directly to 23S ribosomal RNA and is necessary for the in vitro assembly process of the 50S ribosomal subunit. It is not involved in the protein synthesizing functions of that subunit. This is Large ribosomal subunit protein bL20 from Hydrogenobaculum sp. (strain Y04AAS1).